A 443-amino-acid chain; its full sequence is Fatty acid desaturase 3 (443 aa).

The Cytoplasmic portion of the chain corresponds to 1–130; it reads MGGVGEPDWE…EDMKLFEAKP (130 aa). Residues 18–95 form the Cytochrome b5 heme-binding domain; sequence LPTLRWEQVR…LQPLLIGELA (78 aa). The chain crosses the membrane as a helical span at residues 131 to 151; it reads AFFGLLLGHILAMEVLAWLMI. Residue Tyr-152 is a topological domain, lumenal. A helical membrane pass occupies residues 153–173; that stretch reads MLGPGWVPSTLAALILAISQA. The Cytoplasmic segment spans residues 174–259; the sequence is QSWCLQHDLG…KKKRRYLPYN (86 aa). The Histidine box-1 signature appears at 180-184; that stretch reads HDLGH. The Histidine box-2 motif lies at 217-221; the sequence is HFQHH. Residues 260 to 280 traverse the membrane as a helical segment; the sequence is HQHLYFFLIGPPLLTLVNFEV. The Lumenal segment spans residues 281 to 282; sequence EN. Residues 283 to 303 form a helical membrane-spanning segment; it reads LAYMLVCMQWMDLLWAASFYA. Position 304 (Arg-304) is a topological domain, cytoplasmic. The helical transmembrane segment at 305–325 threads the bilayer; it reads FLLSYIPFYGIPGALLLFVAV. Residues 326 to 443 are Lumenal-facing; that stretch reads RVLESHWFVW…NVWLEAYLHQ (118 aa). Positions 381–385 match the Histidine box-3 motif; it reads QIEHH.

The protein belongs to the fatty acid desaturase type 1 family.

It localises to the endoplasmic reticulum membrane. It catalyses the reaction an N-acylsphing-4-enine + 2 Fe(II)-[cytochrome b5] + O2 + 2 H(+) = an N-acyl-sphinga-4E,14Z-dienine + 2 Fe(III)-[cytochrome b5] + 2 H2O. The catalysed reaction is N-(hexanoyl)sphing-4-enine + 2 Fe(II)-[cytochrome b5] + O2 + 2 H(+) = N-hexanoyl-sphinga-4E,14Z-dienine + 2 Fe(III)-[cytochrome b5] + 2 H2O. The enzyme catalyses sphing-4-enine + 2 Fe(II)-[cytochrome b5] + O2 + 2 H(+) = sphinga-4E,14Z-dienine + 2 Fe(III)-[cytochrome b5] + 2 H2O. It carries out the reaction (11E)-octadecenoyl-CoA + 2 Fe(II)-[cytochrome b5] + O2 + 2 H(+) = (11E,13Z)-octadecadienoyl-CoA + 2 Fe(III)-[cytochrome b5] + 2 H2O. It catalyses the reaction N-acyl-1-deoxysphinganine + 2 Fe(II)-[cytochrome b5] + O2 + 2 H(+) = N-acyl-1-deoxysphing-14Z-enine + 2 Fe(III)-[cytochrome b5] + 2 H2O. The catalysed reaction is an N-acylsphinganine + 2 Fe(II)-[cytochrome b5] + O2 + 2 H(+) = an N-acylsphing-14Z-enine + 2 Fe(III)-[cytochrome b5] + 2 H2O. It participates in lipid metabolism; polyunsaturated fatty acid biosynthesis. It functions in the pathway lipid metabolism; sphingolipid metabolism. Its function is as follows. Mammals have different sphingoid bases that differ in their length and/or pattern of desaturation and hydroxyl groups. The predominant sphingoid base that comprises mammalian ceramides is sphing-4-enine (sphingosine or SPH) which has a trans (E) desaturation at carbon 4. FADS3 is a desaturase that introduces a cis (Z) double bond between carbon 14 and carbon 15 of the sphingoid base (also known as long chain base, LCB), producing LCBs such as sphinga-4,14-dienine (SPD, d18:2(4E,14Z)) from SPH. Prefers SPH-containing ceramides (N-acylsphing-4-enines) as substrates. Capable of metabolizing also the SPH in its free form. SPD ceramides occur widely in mammalian tissues and cells. Due to their unusual structure containing a cis double bond, SPD ceramides may have an opposite, negative role in lipid microdomain formation relative to conventional ceramides. Could be involved in the detoxification of 1-deoxy sphingolipids, by desaturating the cytotoxic 1-deoxysphinganine (1-deoxySA, m18:0), produced under pathological conditions, to 1-deoxysphingenine (1-deoxysphingosine, 1-deoxySO, m18:1). Although prefers SPH-containing ceramides (N-acylsphing-4-enines) as substrates, it also exhibits activity toward dihydrosphingosine-containing CERs (N-acylsphinganines) and produces 14Z-SPH-containing sphingolipids. Its desaturase mechanism involves an electron transfer facilitated by cytochrome b5. FADS3 also acts as a methyl-end fatty acyl coenzyme A (CoA) desaturase that introduces a cis double bond between the preexisting double bond and the terminal methyl group of the fatty acyl chain. Desaturates (11E)-octadecenoate (trans-vaccenoate, the predominant trans fatty acid in human milk) at carbon 13 to generate (11E,13Z)-octadecadienoate (also known as conjugated linoleic acid 11E,13Z-CLA). The polypeptide is Fatty acid desaturase 3 (Bos taurus (Bovine)).